A 706-amino-acid polypeptide reads, in one-letter code: Transmembrane 9 superfamily member 3 (706 aa).

Positions 1–33 (MRVRPKRSVITLMAIVVVMLILRNQFYSSRTRG) are cleaved as a signal peptide. Topologically, residues 34–290 (HGQEPVISSS…LSDEQSIQFH (257 aa)) are lumenal. A helical membrane pass occupies residues 291 to 311 (WMSLANSVGIVLSISFITLII). The Cytoplasmic portion of the chain corresponds to 312–371 (YVRVMYTDKSNSKSPKYMINIEGIETEDDLDDDKYGKYSVYTVAKDWIQNGRPNLFGLKV). Residues 372–392 (LILLVSFGVQFLFTIIGSLTI) form a helical membrane-spanning segment. Residues 393-405 (SCSMNKLHNVRNS) lie on the Lumenal side of the membrane. Residues 406-426 (VLTMAILFFVLGAFMASFVGT) form a helical membrane-spanning segment. Topologically, residues 427–456 (RLSMVTKTKRTKANYLDDNRYLKDYKKFSP) are cytoplasmic. Residues 457–477 (IFTILCGSSLPGIVMVSTFLL) traverse the membrane as a helical segment. Over 478–494 (NSIVWAHDSTSALPFKT) the chain is Lumenal. A helical membrane pass occupies residues 495–515 (IVFFMSIYFIVCIPLSLFGGI). The Cytoplasmic segment spans residues 516–553 (VANNIPLPQYWLSGITKDESNSDGNGLFVPKSRAKFNP). Residues 554–574 (LVYCGIYLCGIFPLLVIYVEM) form a helical membrane-spanning segment. Residues 575 to 592 (QYVYKSLWLEKTTFYYFY) are Lumenal-facing. Residues 593–613 (GFLFLSIILLCVLTMEISIIG) traverse the membrane as a helical segment. Over 614-637 (SYLLMRFCFEDKVVRNNWRWKCFE) the chain is Cytoplasmic. The helical transmembrane segment at 638–658 (MGFSGGVYMELYSLYYIFAVL) threads the bilayer. At 659 to 665 (NIHGFSS) the chain is on the lumenal side. Residues 666 to 686 (ILISICYSLIFNVMCSLGLGA) traverse the membrane as a helical segment. At 687–706 (LSYLTASWFINKIYHQKVNL) the chain is on the cytoplasmic side.

It belongs to the nonaspanin (TM9SF) (TC 9.A.2) family.

It is found in the golgi apparatus membrane. Functionally, with EMP70 and TMN2, plays a critical role in the late stages of a nutrient-controlled pathway notably regulating FLO11 gene expression. Acts downstream of RAS2 and TOR. Essential for cell adhesion and filamentous growth. May play a role as effector of cellular copper homeostasis. This is Transmembrane 9 superfamily member 3 (TMN3) from Saccharomyces cerevisiae (strain ATCC 204508 / S288c) (Baker's yeast).